The chain runs to 295 residues: Small ribosomal subunit protein uS2 (295 aa).

Ser-2 carries the N-acetylserine modification. Ser-43 is subject to Phosphoserine. Lys-52 is subject to N6-acetyllysine. The tract at residues 54–113 is interaction with PPP1R16B; that stretch reads TWEKLLLAARAIVAIENPADVSVISSRNTGQRAVLKFAAATGATPIAGRFTPGTFTNQIQ. N6-acetyllysine; alternate is present on Lys-89. Lys-89 participates in a covalent cross-link: Glycyl lysine isopeptide (Lys-Gly) (interchain with G-Cter in SUMO2); alternate. Thr-97 is subject to Phosphothreonine. Laminin-binding regions lie at residues 161 to 180 and 205 to 229; these read IPCN…MLAR and RDPE…EFQG. 5 [DE]-W-[ST] repeats span residues 230 to 232, 247 to 249, 266 to 268, 275 to 277, and 293 to 295; these read EWT, DWS, and EWS. The tract at residues 242-295 is laminin-binding; sequence QPEVADWSEGVQVPSVPIQQFPTEDWSAQPATEDWSAAPTAQATEWVGTTTEWS. The interval 266 to 295 is disordered; sequence DWSAQPATEDWSAAPTAQATEWVGTTTEWS. Residues 280 to 295 are compositionally biased toward polar residues; sequence PTAQATEWVGTTTEWS.

It belongs to the universal ribosomal protein uS2 family. Monomer (37LRP) and homodimer (67LR). Component of the small ribosomal subunit. Mature ribosomes consist of a small (40S) and a large (60S) subunit. The 40S subunit contains about 33 different proteins and 1 molecule of RNA (18S). The 60S subunit contains about 49 different proteins and 3 molecules of RNA (28S, 5.8S and 5S). Interacts with RPS21. Interacts with several laminins including at least LAMB1. Interacts with MDK. The mature dimeric form interacts with PPP1R16B (via its fourth ankyrin repeat). Interacts with PPP1CA only in the presence of PPP1R16B. Acylated. Acylation may be a prerequisite for conversion of the monomeric 37 kDa laminin receptor precursor (37LRP) to the mature dimeric 67 kDa laminin receptor (67LR), and may provide a mechanism for membrane association. In terms of processing, cleaved by stromelysin-3 (ST3) at the cell surface. Cleavage by stromelysin-3 may be a mechanism to alter cell-extracellular matrix interactions.

The protein localises to the cell membrane. It is found in the cytoplasm. It localises to the nucleus. In terms of biological role, required for the assembly and/or stability of the 40S ribosomal subunit. Required for the processing of the 20S rRNA-precursor to mature 18S rRNA in a late step of the maturation of 40S ribosomal subunits. Also functions as a cell surface receptor for laminin. Plays a role in cell adhesion to the basement membrane and in the consequent activation of signaling transduction pathways. May play a role in cell fate determination and tissue morphogenesis. Also acts as a receptor for several other ligands, including the pathogenic prion protein, viruses, and bacteria. Acts as a PPP1R16B-dependent substrate of PPP1CA. The protein is Small ribosomal subunit protein uS2 of Oryctolagus cuniculus (Rabbit).